Consider the following 139-residue polypeptide: ATP synthase epsilon chain (139 aa).

Belongs to the ATPase epsilon chain family. As to quaternary structure, F-type ATPases have 2 components, CF(1) - the catalytic core - and CF(0) - the membrane proton channel. CF(1) has five subunits: alpha(3), beta(3), gamma(1), delta(1), epsilon(1). CF(0) has three main subunits: a, b and c.

The protein localises to the cell inner membrane. In terms of biological role, produces ATP from ADP in the presence of a proton gradient across the membrane. The polypeptide is ATP synthase epsilon chain (Nitrosospira multiformis (strain ATCC 25196 / NCIMB 11849 / C 71)).